Consider the following 449-residue polypeptide: uncharacterized protein (449 aa).

The N-terminal stretch at 1–20 is a signal peptide; the sequence is MWTALVLIWIFSLSLSESHA. The Extracellular segment spans residues 21 to 400; that stretch reads ASNDPRNFVP…PLTQAVVDKT (380 aa). N-linked (GlcNAc...) asparagine glycosylation is present at Asn49. Disordered regions lie at residues 72–101, 154–187, and 215–381; these read AHLN…AADG, MTAA…GHPS, and QTVA…PSTQ. Low complexity-rich tracts occupy residues 154 to 184 and 215 to 234; these read MTAA…TATG and QTVA…PSPS. Polar residues-rich tracts occupy residues 255–279 and 352–367; these read GPIS…MPSN and TPGT…SSGG. The helical transmembrane segment at 401–421 threads the bilayer; sequence LLLVVLLLGVTLFITVLVLFA. Residues 422–449 are Cytoplasmic-facing; sequence LQAYESYKKKDYTQVDYLINGMYADSEM.

Highest expression in heart, placenta, liver, pancreas and colon. Also detected in brain, lung, skeletal muscle, kidney, spleen, prostate, testis, ovary and small intestine. Lowest expression in thymus and leukocytes.

The protein localises to the cell membrane. It localises to the golgi apparatus. It is found in the trans-Golgi network membrane. This is an uncharacterized protein from Homo sapiens (Human).